Consider the following 306-residue polypeptide: tRNA pseudouridine synthase B (306 aa).

The Nucleophile role is filled by aspartate 43.

It belongs to the pseudouridine synthase TruB family. Type 1 subfamily.

It carries out the reaction uridine(55) in tRNA = pseudouridine(55) in tRNA. Its function is as follows. Responsible for synthesis of pseudouridine from uracil-55 in the psi GC loop of transfer RNAs. This Lacticaseibacillus casei (strain BL23) (Lactobacillus casei) protein is tRNA pseudouridine synthase B.